The primary structure comprises 100 residues: Class II hydrophobin CU (100 aa).

The signal sequence occupies residues 1–25; sequence MQFSIATIALFLSSAMAAPYSGNSN. Cystine bridges form between Cys32-Cys82, Cys42-Cys72, Cys43-Cys55, and Cys83-Cys94.

It belongs to the cerato-ulmin hydrophobin family. In terms of assembly, homotetramer. Further self-assembles to form highly ordered films at water-air interfaces through intermolecular interactions.

It localises to the secreted. The protein resides in the cell wall. In terms of biological role, aerial growth, conidiation, and dispersal of filamentous fungi in the environment rely upon a capability of their secreting small amphipathic proteins called hydrophobins (HPBs) with low sequence identity. Class I can self-assemble into an outermost layer of rodlet bundles on aerial cell surfaces, conferring cellular hydrophobicity that supports fungal growth, development and dispersal; whereas Class II form highly ordered films at water-air interfaces through intermolecular interactions but contribute nothing to the rodlet structure. CU is a class II hydrophobin that is implicated in the pathogenicity of this fungus on elm trees. Required for hydrophobicity and adherence of the cells and acts as a parasitic fitness factor by protecting infectious propagules from desiccation. Reduces the interfacial tension of both oil-water and air-water interfaces. The protein is Class II hydrophobin CU of Ophiostoma ulmi (Dutch elm disease fungus).